Consider the following 520-residue polypeptide: GMP synthase [glutamine-hydrolyzing] (520 aa).

Positions 9-202 constitute a Glutamine amidotransferase type-1 domain; the sequence is TILIIDFGSQ…VHRIVGVKPG (194 aa). Cysteine 86 acts as the Nucleophile in catalysis. Catalysis depends on residues histidine 176 and glutamate 178. The region spanning 203 to 395 is the GMPS ATP-PPase domain; that stretch reads WTMGAYREQA…LGLPDSFIGR (193 aa). 230-236 serves as a coordination point for ATP; it reads SGGVDSS.

As to quaternary structure, homodimer.

It carries out the reaction XMP + L-glutamine + ATP + H2O = GMP + L-glutamate + AMP + diphosphate + 2 H(+). It functions in the pathway purine metabolism; GMP biosynthesis; GMP from XMP (L-Gln route): step 1/1. In terms of biological role, catalyzes the synthesis of GMP from XMP. This chain is GMP synthase [glutamine-hydrolyzing], found in Brucella canis (strain ATCC 23365 / NCTC 10854 / RM-666).